We begin with the raw amino-acid sequence, 699 residues long: MTAIRGGSRRAPGLALALLGGVLLGACHGDENAQVNALPGFVSGSVRKTAYDGASDDLLTAGLGKTGLGSDTRPGFANPAQPSAAELRRLAIYSNYRALVDITPNGGYGRFWGPNVDLAGNDTLGEGKIAGTEYLAYSDDGSGRKNVTLLVQVPASFDPANPCIVTATASGSRGVYGAIAAAGEWGLKRGCAVAYNDKGGGNGAHEIGTGVVTLIDGTLATASSAGSSSLFTASESSSTLAAFNSAFPNRYAYKHAHSQQNPEQDWGRVTLQAVEFAYWALNEQFGPVVDGTRHGIRYRPGDITTIAASVSNGGGSALAAAEQDTRGWITAVVVGEPQINVRMTPGVTVEQGGAPVPSFGRPLADYATLANLLQPCAAAAVAATGAPYLSALPMGVTQSIRTQRCATLAAAGLVSGADTASQASDALAQLHAAGYLADSDLLQAPMWDSQAMPAIAVTYANAYTRSRVTDNLCNFSFATTNPVTGAVAAPAVSPMTNLFGAGNGVPPTNGINLVFNGASGGVDHRLATPDASFAGAFCLRQLWTANQLGIGTNVDAVRVAANLQHKPAIIVHGRSDALVPVNHASRAYVAQNSATEGRASQLSFYEVTNGQHFDAFLSVPGFDTRFVPVHYYDEQALNLMWNHLKSGAPLPPSQVIRTVPRGGVPGAAPALSTANLPPIVQSPGANAIAVNAGVIDVPL.

An N-terminal signal peptide occupies residues M1 to A33. The active-site Charge relay system is the S311.

This sequence belongs to the D-(-)-3-hydroxybutyrate oligomer hydrolase family.

Its subcellular location is the secreted. The enzyme catalyses (3R)-hydroxybutanoate dimer + H2O = 2 (R)-3-hydroxybutanoate + H(+). It participates in lipid metabolism; butanoate metabolism. Participates in the degradation of poly-3-hydroxybutyrate (PHB). It works downstream of poly(3-hydroxybutyrate) depolymerase, hydrolyzing D(-)-3-hydroxybutyrate oligomers of various length (3HB-oligomers) into 3HB-monomers. This is D-(-)-3-hydroxybutyrate oligomer hydrolase from Burkholderia pseudomallei (strain 1710b).